We begin with the raw amino-acid sequence, 872 residues long: MKELSSAQIRQMWLDFWKSKGHCVEPSANLVPVNDPTLLWINSGVATLKKYFDGSVIPENPRITNAQKSIRTNDIENVGKTARHHTMFEMLGNFSIGDYFRDEAIEWGFELLTSPDWFDFPKDKLYMTYYPDDKDSYNRWIACGVEPSHLVPIEDNFWEIGAGPSGPDTEIFFDRGEDFDPENIGLRLLAEDIENDRYIEIWNIVLSQFNADPAVPRSEYKELPNKNIDTGAGLERLAAVMQGAKTNFETDLFMPIIREVEKLSGKTYDPDGDNMSFKVIADHIRALSFAIGDGALPGNEGRGYVLRRLLRRAVMHGRRLGINETFLYKLVPTVGQIMESYYPEVLEKRDFIEKIVKREEETFARTIDAGSGHLDSLLAQLKAEGKDTLEGKDIFKLYDTYGFPVELTEELAEDAGYKIDHEGFKSAMKEQQDRARAAVVKGGSMGMQNETLAGIVEESRFEYDTYSLESSLSVIIADNERTEAVSEGQALLVFAQTPFYAEMGGQVADTGRIKNDKGDTVAEVVDVQKAPNGQPLHTVNVLASLSVGTNYTLEINKERRLAVEKNHTATHLLHAALHNVIGEHATQAGSLNEEEFLRFDFTHFEAVSNEELRHIEQEVNEQIWNALTITTTETDVETAKEMGAMALFGEKYGKVVRVVQIGNYSVELCGGTHLNNSSEIGLFKIVKEEGIGSGTRRIIAVTGRQAFEAYRNQEDALKDIAATVKAPQLKDAAAKVQALSDSLRDLQKENAELKEKAAAAAAGDVFKDVQEAKGVRFIASQVDVADAGALRTFADNWKQKDYSDVLVLVAAIGEKVNVLVASKTKDVHAGNMIKELAPIVAGRGGGKPDMAMAGGSDASKIAELLAAVAEIV.

Residues His567, His571, Cys669, and His673 each contribute to the Zn(2+) site.

Belongs to the class-II aminoacyl-tRNA synthetase family. The cofactor is Zn(2+).

The protein resides in the cytoplasm. The enzyme catalyses tRNA(Ala) + L-alanine + ATP = L-alanyl-tRNA(Ala) + AMP + diphosphate. In terms of biological role, catalyzes the attachment of alanine to tRNA(Ala) in a two-step reaction: alanine is first activated by ATP to form Ala-AMP and then transferred to the acceptor end of tRNA(Ala). Also edits incorrectly charged Ser-tRNA(Ala) and Gly-tRNA(Ala) via its editing domain. This Streptococcus pyogenes serotype M3 (strain ATCC BAA-595 / MGAS315) protein is Alanine--tRNA ligase.